A 442-amino-acid chain; its full sequence is Protein PRRC1-A (442 aa).

The segment at methionine 1–alanine 27 is disordered.

This sequence belongs to the PRRC1 family.

It localises to the golgi apparatus. The chain is Protein PRRC1-A (prrc1-a) from Xenopus laevis (African clawed frog).